The primary structure comprises 252 residues: Probable 6-phosphogluconolactonase 5 (252 aa).

Belongs to the glucosamine/galactosamine-6-phosphate isomerase family. 6-phosphogluconolactonase subfamily.

It is found in the cytoplasm. Its subcellular location is the cytosol. It catalyses the reaction 6-phospho-D-glucono-1,5-lactone + H2O = 6-phospho-D-gluconate + H(+). It functions in the pathway carbohydrate degradation; pentose phosphate pathway; D-ribulose 5-phosphate from D-glucose 6-phosphate (oxidative stage): step 2/3. Its function is as follows. Catalyzes the hydrolysis of 6-phosphogluconolactone to 6-phosphogluconate. This chain is Probable 6-phosphogluconolactonase 5, found in Arabidopsis thaliana (Mouse-ear cress).